A 315-amino-acid polypeptide reads, in one-letter code: Ankyrin repeat domain-containing protein EMB506, chloroplastic (315 aa).

Residues 1–39 (MVSSVLSIPPQTCLLPRLPISDSVNCKSKIVYCLSTSVR) constitute a chloroplast transit peptide. The segment covering 44–65 (KRQSTARTRSFTETNRRTPSVQ) has biased composition (polar residues). A disordered region spans residues 44-106 (KRQSTARTRS…DNESDWEDDS (63 aa)). Over residues 72-104 (EDPDDGSDSENEYEGEEEDGIGNDLDNESDWED) the composition is skewed to acidic residues. 5 ANK repeats span residues 151–180 (KSWK…DIDD), 184–213 (DNQT…NPHL), 217–246 (DGAA…DVNV), 250–279 (EGWT…DKTR), and 283–307 (DGKL…VKLL).

Interacts with AKR. No homodimerization observed. In terms of tissue distribution, expressed in roots, inflorescence stems, flowers, siliques, dry seeds and mature cauline leaves.

The protein localises to the plastid. Its subcellular location is the chloroplast. Functionally, involved in the initial differentiation of the proplastid during the embryo development. Also required for correct cotyledon, true leaf and cauline leaf margin development. This Arabidopsis thaliana (Mouse-ear cress) protein is Ankyrin repeat domain-containing protein EMB506, chloroplastic (EMB506).